A 562-amino-acid chain; its full sequence is Formate--tetrahydrofolate ligase (562 aa).

Residue 71-78 (TPAGEGKS) participates in ATP binding.

It belongs to the formate--tetrahydrofolate ligase family.

It catalyses the reaction (6S)-5,6,7,8-tetrahydrofolate + formate + ATP = (6R)-10-formyltetrahydrofolate + ADP + phosphate. The protein operates within one-carbon metabolism; tetrahydrofolate interconversion. The polypeptide is Formate--tetrahydrofolate ligase (Bacillus cereus (strain ATCC 14579 / DSM 31 / CCUG 7414 / JCM 2152 / NBRC 15305 / NCIMB 9373 / NCTC 2599 / NRRL B-3711)).